Here is a 496-residue protein sequence, read N- to C-terminus: T-cell activation inhibitor, mitochondrial (496 aa).

Residues 404–437 adopt a coiled-coil conformation; that stretch reads KAQQARENMKRKEELKVIENELIQASTKKFSLEK.

The protein localises to the mitochondrion. Its function is as follows. May regulate T-cell apoptosis. The polypeptide is T-cell activation inhibitor, mitochondrial (TCAIM) (Homo sapiens (Human)).